A 433-amino-acid chain; its full sequence is Tol-Pal system protein TolB (433 aa).

An N-terminal signal peptide occupies residues 1–21 (MIKRLRGLLVMLCCVAGMAVA).

The protein belongs to the TolB family. The Tol-Pal system is composed of five core proteins: the inner membrane proteins TolA, TolQ and TolR, the periplasmic protein TolB and the outer membrane protein Pal. They form a network linking the inner and outer membranes and the peptidoglycan layer.

Its subcellular location is the periplasm. Functionally, part of the Tol-Pal system, which plays a role in outer membrane invagination during cell division and is important for maintaining outer membrane integrity. This chain is Tol-Pal system protein TolB, found in Pseudomonas putida (strain ATCC 47054 / DSM 6125 / CFBP 8728 / NCIMB 11950 / KT2440).